A 515-amino-acid chain; its full sequence is Probable 2-isopropylmalate synthase (515 aa).

The region spanning 20–271 (VTVFDTTLRD…KTNIRTEYLV (252 aa)) is the Pyruvate carboxyltransferase domain. A divalent metal cation contacts are provided by aspartate 29, histidine 209, histidine 211, and asparagine 245.

The protein belongs to the alpha-IPM synthase/homocitrate synthase family. In terms of assembly, homodimer. A divalent metal cation is required as a cofactor.

The catalysed reaction is 3-methyl-2-oxobutanoate + acetyl-CoA + H2O = (2S)-2-isopropylmalate + CoA + H(+). It participates in amino-acid biosynthesis; L-leucine biosynthesis; L-leucine from 3-methyl-2-oxobutanoate: step 1/4. Its function is as follows. Catalyzes the condensation of the acetyl group of acetyl-CoA with 3-methyl-2-oxobutanoate (2-oxoisovalerate) to form 3-carboxy-3-hydroxy-4-methylpentanoate (2-isopropylmalate). The protein is Probable 2-isopropylmalate synthase (leuA) of Methanosarcina acetivorans (strain ATCC 35395 / DSM 2834 / JCM 12185 / C2A).